A 460-amino-acid chain; its full sequence is Bifunctional protein GlmU (460 aa).

A pyrophosphorylase region spans residues 1–229; the sequence is MTNYAIILAA…FNESLGVNDR (229 aa). UDP-N-acetyl-alpha-D-glucosamine-binding positions include 8 to 11, K22, Q72, and 77 to 78; these read LAAG and GT. D102 lines the Mg(2+) pocket. G139, E154, N169, and N227 together coordinate UDP-N-acetyl-alpha-D-glucosamine. N227 is a Mg(2+) binding site. Residues 230 to 250 form a linker region; sequence VALATAETVMRQRITQKHMVN. Positions 251-460 are N-acetyltransferase; it reads GVTFHNPETV…RLAHHPSRSK (210 aa). The UDP-N-acetyl-alpha-D-glucosamine site is built by R332 and K350. H362 functions as the Proton acceptor in the catalytic mechanism. UDP-N-acetyl-alpha-D-glucosamine-binding residues include Y365 and N376. Acetyl-CoA contacts are provided by residues A379, 385–386, S404, A422, and R439; that span reads NY.

This sequence in the N-terminal section; belongs to the N-acetylglucosamine-1-phosphate uridyltransferase family. It in the C-terminal section; belongs to the transferase hexapeptide repeat family. In terms of assembly, homotrimer. Mg(2+) serves as cofactor.

Its subcellular location is the cytoplasm. It carries out the reaction alpha-D-glucosamine 1-phosphate + acetyl-CoA = N-acetyl-alpha-D-glucosamine 1-phosphate + CoA + H(+). It catalyses the reaction N-acetyl-alpha-D-glucosamine 1-phosphate + UTP + H(+) = UDP-N-acetyl-alpha-D-glucosamine + diphosphate. Its pathway is nucleotide-sugar biosynthesis; UDP-N-acetyl-alpha-D-glucosamine biosynthesis; N-acetyl-alpha-D-glucosamine 1-phosphate from alpha-D-glucosamine 6-phosphate (route II): step 2/2. The protein operates within nucleotide-sugar biosynthesis; UDP-N-acetyl-alpha-D-glucosamine biosynthesis; UDP-N-acetyl-alpha-D-glucosamine from N-acetyl-alpha-D-glucosamine 1-phosphate: step 1/1. It participates in bacterial outer membrane biogenesis; LPS lipid A biosynthesis. In terms of biological role, catalyzes the last two sequential reactions in the de novo biosynthetic pathway for UDP-N-acetylglucosamine (UDP-GlcNAc). The C-terminal domain catalyzes the transfer of acetyl group from acetyl coenzyme A to glucosamine-1-phosphate (GlcN-1-P) to produce N-acetylglucosamine-1-phosphate (GlcNAc-1-P), which is converted into UDP-GlcNAc by the transfer of uridine 5-monophosphate (from uridine 5-triphosphate), a reaction catalyzed by the N-terminal domain. The chain is Bifunctional protein GlmU from Streptococcus pyogenes serotype M3 (strain ATCC BAA-595 / MGAS315).